The following is a 572-amino-acid chain: Urease subunit alpha (572 aa).

The Urease domain occupies 130 to 572 (GGVDTHIHFI…LPMAQRYFLF (443 aa)). 3 residues coordinate Ni(2+): His135, His137, and Lys218. The residue at position 218 (Lys218) is an N6-carboxylysine. His220 contributes to the substrate binding site. The Ni(2+) site is built by His247 and His273. His321 functions as the Proton donor in the catalytic mechanism. Position 361 (Asp361) interacts with Ni(2+).

Belongs to the metallo-dependent hydrolases superfamily. Urease alpha subunit family. In terms of assembly, heterotrimer of UreA (gamma), UreB (beta) and UreC (alpha) subunits. Three heterotrimers associate to form the active enzyme. Ni cation is required as a cofactor. In terms of processing, carboxylation allows a single lysine to coordinate two nickel ions.

It localises to the cytoplasm. It catalyses the reaction urea + 2 H2O + H(+) = hydrogencarbonate + 2 NH4(+). It participates in nitrogen metabolism; urea degradation; CO(2) and NH(3) from urea (urease route): step 1/1. In Ralstonia nicotianae (strain ATCC BAA-1114 / GMI1000) (Ralstonia solanacearum), this protein is Urease subunit alpha.